A 420-amino-acid chain; its full sequence is Phosphoribosylamine--glycine ligase (420 aa).

The 207-residue stretch at 108–314 (KQFMEKYAIP…FAALIAALLN (207 aa)) folds into the ATP-grasp domain. ATP is bound at residue 134–195 (LDERGVPIVI…EDFLAGEEFS (62 aa)). E284 and N286 together coordinate Mg(2+).

Belongs to the GARS family. Mg(2+) serves as cofactor. Requires Mn(2+) as cofactor.

It carries out the reaction 5-phospho-beta-D-ribosylamine + glycine + ATP = N(1)-(5-phospho-beta-D-ribosyl)glycinamide + ADP + phosphate + H(+). The protein operates within purine metabolism; IMP biosynthesis via de novo pathway; N(1)-(5-phospho-D-ribosyl)glycinamide from 5-phospho-alpha-D-ribose 1-diphosphate: step 2/2. This is Phosphoribosylamine--glycine ligase from Listeria innocua serovar 6a (strain ATCC BAA-680 / CLIP 11262).